The sequence spans 424 residues: Glutamyl-tRNA reductase (424 aa).

Substrate is bound by residues T51–R54, S99, E104–Q106, and Q110. C52 functions as the Nucleophile in the catalytic mechanism. An NADP(+)-binding site is contributed by G179–G184.

It belongs to the glutamyl-tRNA reductase family. Homodimer.

The enzyme catalyses (S)-4-amino-5-oxopentanoate + tRNA(Glu) + NADP(+) = L-glutamyl-tRNA(Glu) + NADPH + H(+). It participates in porphyrin-containing compound metabolism; protoporphyrin-IX biosynthesis; 5-aminolevulinate from L-glutamyl-tRNA(Glu): step 1/2. Functionally, catalyzes the NADPH-dependent reduction of glutamyl-tRNA(Glu) to glutamate 1-semialdehyde (GSA). This Methanospirillum hungatei JF-1 (strain ATCC 27890 / DSM 864 / NBRC 100397 / JF-1) protein is Glutamyl-tRNA reductase.